The primary structure comprises 118 residues: Large ribosomal subunit protein bL20 (118 aa).

The protein belongs to the bacterial ribosomal protein bL20 family.

In terms of biological role, binds directly to 23S ribosomal RNA and is necessary for the in vitro assembly process of the 50S ribosomal subunit. It is not involved in the protein synthesizing functions of that subunit. The polypeptide is Large ribosomal subunit protein bL20 (Agathobacter rectalis (strain ATCC 33656 / DSM 3377 / JCM 17463 / KCTC 5835 / VPI 0990) (Eubacterium rectale)).